The primary structure comprises 89 residues: Small ribosomal subunit protein uS15 (89 aa).

The protein belongs to the universal ribosomal protein uS15 family. Part of the 30S ribosomal subunit. Forms a bridge to the 50S subunit in the 70S ribosome, contacting the 23S rRNA.

In terms of biological role, one of the primary rRNA binding proteins, it binds directly to 16S rRNA where it helps nucleate assembly of the platform of the 30S subunit by binding and bridging several RNA helices of the 16S rRNA. Forms an intersubunit bridge (bridge B4) with the 23S rRNA of the 50S subunit in the ribosome. The sequence is that of Small ribosomal subunit protein uS15 from Nitratiruptor sp. (strain SB155-2).